A 265-amino-acid polypeptide reads, in one-letter code: Capsule polysaccharide export inner-membrane protein CtrC (265 aa).

A run of 6 helical transmembrane segments spans residues 37-57, 64-84, 121-141, 147-167, 178-198, and 236-256; these read IGFLWLFVEPLLLTLVMVLMW, NVSALNIVAFTLTGYPMMMMW, IAGATIAQVVIMFALVIIGWI, IFYMLLAWLLMAMFAVGLGLV, FGKVWSTISFVMMPLSGVFFF, and NPWYILLCNLVLLLLGLAVVA. An ABC transmembrane type-2 domain is found at 37–258; sequence IGFLWLFVEP…LLGLAVVARF (222 aa).

Belongs to the ABC-2 integral membrane protein family.

Its subcellular location is the cell inner membrane. In terms of biological role, may form an ATP-driven capsule polysaccharide export apparatus, in association with the CtrB and CtrD proteins. This is Capsule polysaccharide export inner-membrane protein CtrC (ctrC) from Neisseria meningitidis serogroup A / serotype 4A (strain DSM 15465 / Z2491).